A 350-amino-acid chain; its full sequence is Probable galactose-1-phosphate uridylyltransferase (350 aa).

Positions 31 to 52 (PWSGQQEKAQKNELPEFDPTNP) are disordered. A Zn(2+)-binding site is contributed by Cys54. UDP-alpha-D-glucose-binding positions include 76-77 (ND) and Asn152. His163 contributes to the Zn(2+) binding site. The active-site Tele-UMP-histidine intermediate is the His165. UDP-alpha-D-glucose-binding positions include Gln167, 314–317 (KFMV), and 319–320 (FE).

It belongs to the galactose-1-phosphate uridylyltransferase type 1 family. In terms of assembly, homodimer. Zn(2+) is required as a cofactor.

It carries out the reaction alpha-D-galactose 1-phosphate + UDP-alpha-D-glucose = alpha-D-glucose 1-phosphate + UDP-alpha-D-galactose. Its pathway is carbohydrate metabolism; galactose metabolism. This is Probable galactose-1-phosphate uridylyltransferase (Galt) from Drosophila melanogaster (Fruit fly).